Reading from the N-terminus, the 547-residue chain is Alpha-humulene/(-)-(E)-beta-caryophyllene synthase (547 aa).

Residues Arg-262, Asp-299, Asp-303, Arg-442, and Asp-445 each contribute to the (2E,6E)-farnesyl diphosphate site. Asp-299 and Asp-303 together coordinate Mg(2+). The DDXXD motif signature appears at 299-303 (DDMYD). Asp-445, Asp-446, Ser-449, and Glu-453 together coordinate Mg(2+).

Belongs to the terpene synthase family. Tpsa subfamily. As to quaternary structure, monomer. The cofactor is Mg(2+). Mn(2+) serves as cofactor. Expressed exclusively in flowers. Expressed in the flower stigmata and also detected in the mesocarp cell layers of the silique wall.

It is found in the cytoplasm. It catalyses the reaction (2E,6E)-farnesyl diphosphate = (-)-(E)-beta-caryophyllene + diphosphate. It carries out the reaction (2E,6E)-farnesyl diphosphate = alpha-copaene + diphosphate. The catalysed reaction is (2E,6E)-farnesyl diphosphate = alpha-humulene + diphosphate. The enzyme catalyses (2E,6E)-farnesyl diphosphate = (1S,2S,4R)-beta-elemene + diphosphate. The protein operates within secondary metabolite biosynthesis; terpenoid biosynthesis. Involved in sesquiterpene (C15) biosynthesis. The major products are beta-caryophyllene and alpha-humulene. Does not convert geranyl diphosphate (GPP) to any monoterpenes. The polypeptide is Alpha-humulene/(-)-(E)-beta-caryophyllene synthase (Arabidopsis thaliana (Mouse-ear cress)).